Here is a 255-residue protein sequence, read N- to C-terminus: tRNA (guanine-N(1)-)-methyltransferase (255 aa).

S-adenosyl-L-methionine-binding positions include glycine 113 and 133–138 (IGDYVL).

Belongs to the RNA methyltransferase TrmD family. As to quaternary structure, homodimer.

It is found in the cytoplasm. The enzyme catalyses guanosine(37) in tRNA + S-adenosyl-L-methionine = N(1)-methylguanosine(37) in tRNA + S-adenosyl-L-homocysteine + H(+). Functionally, specifically methylates guanosine-37 in various tRNAs. The protein is tRNA (guanine-N(1)-)-methyltransferase of Klebsiella pneumoniae (strain 342).